An 89-amino-acid chain; its full sequence is MALTAEQKKEILGQYGLHDTDTGSPEAQVALLTKRIVDLTEHLKQHKHDHHSRRGLLLLVGRRRRLLKYVAQVDVERYRSLIERLGLRR.

The protein belongs to the universal ribosomal protein uS15 family. In terms of assembly, part of the 30S ribosomal subunit. Forms a bridge to the 50S subunit in the 70S ribosome, contacting the 23S rRNA.

One of the primary rRNA binding proteins, it binds directly to 16S rRNA where it helps nucleate assembly of the platform of the 30S subunit by binding and bridging several RNA helices of the 16S rRNA. Its function is as follows. Forms an intersubunit bridge (bridge B4) with the 23S rRNA of the 50S subunit in the ribosome. This is Small ribosomal subunit protein uS15 from Mycolicibacterium vanbaalenii (strain DSM 7251 / JCM 13017 / BCRC 16820 / KCTC 9966 / NRRL B-24157 / PYR-1) (Mycobacterium vanbaalenii).